The chain runs to 377 residues: Probable riboflavin import permease protein RfuC (377 aa).

10 helical membrane-spanning segments follow: residues valine 4 to leucine 24, alanine 49 to lysine 69, methionine 72 to leucine 92, valine 98 to leucine 118, isoleucine 135 to valine 155, phenylalanine 182 to phenylalanine 202, phenylalanine 223 to leucine 245, phenylalanine 249 to tyrosine 268, alanine 274 to methionine 294, and leucine 303 to isoleucine 323.

Belongs to the binding-protein-dependent transport system permease family. As to quaternary structure, the complex is probably composed of two ATP-binding proteins (RfuB), two transmembrane proteins (RfuC and RfuD) and a solute-binding protein (RfuA).

The protein localises to the cell inner membrane. Functionally, probably part of the ABC transporter complex RfuABCD involved in riboflavin import. Probably responsible for the translocation of the substrate across the membrane. This is Probable riboflavin import permease protein RfuC from Treponema pallidum (strain Nichols).